The primary structure comprises 179 residues: Gut granule loss protein 3 (179 aa).

Residues 40-59 (DLDSASSGVGSSTCTEEQES) are disordered. A compositionally biased stretch (polar residues) spans 42–54 (DSASSGVGSSTCT).

The protein is Gut granule loss protein 3 (glo-3) of Caenorhabditis elegans.